A 524-amino-acid polypeptide reads, in one-letter code: Lycopene epsilon cyclase, chloroplastic (524 aa).

Residues 1 to 45 (MECVGARNFAAMAVSTFPSWSCRRKFPVVKRYSYRNIRFGLCSVR) constitute a chloroplast transit peptide. 111 to 139 (LVVIGCGPAGLALAAESAKLGLKVGLIGP) contacts NAD(+). 2 helical membrane passes run 441–461 (FFLF…RSFF) and 475–495 (FLGS…MFVI).

This sequence belongs to the lycopene cyclase family.

Its subcellular location is the plastid. The protein localises to the chloroplast membrane. The catalysed reaction is a carotenoid psi-end group = a carotenoid epsilon-end group. The protein operates within carotenoid biosynthesis; alpha-zeacarotene biosynthesis. It functions in the pathway carotenoid biosynthesis; delta-carotene biosynthesis. Involved in carotenoid biosynthesis. Catalyzes the single epsilon-cyclization reaction which converts lycopene to delta-carotene and neurosporene to alpha-zeacarotene. Required for lutein biosynthesis. The sequence is that of Lycopene epsilon cyclase, chloroplastic from Arabidopsis thaliana (Mouse-ear cress).